A 180-amino-acid chain; its full sequence is NAD(P)H-quinone oxidoreductase subunit I, chloroplastic (180 aa).

2 4Fe-4S ferredoxin-type domains span residues 55–84 and 95–124; these read GRIHFEFDKCIACEVCVRVCPIDLPVVHWR and LNYSIDFGICIFCGNCVEYCPTNCLSMTEE. The [4Fe-4S] cluster site is built by C64, C67, C70, C74, C104, C107, C110, and C114.

This sequence belongs to the complex I 23 kDa subunit family. In terms of assembly, NDH is composed of at least 16 different subunits, 5 of which are encoded in the nucleus. [4Fe-4S] cluster is required as a cofactor.

The protein resides in the plastid. Its subcellular location is the chloroplast thylakoid membrane. The enzyme catalyses a plastoquinone + NADH + (n+1) H(+)(in) = a plastoquinol + NAD(+) + n H(+)(out). It catalyses the reaction a plastoquinone + NADPH + (n+1) H(+)(in) = a plastoquinol + NADP(+) + n H(+)(out). NDH shuttles electrons from NAD(P)H:plastoquinone, via FMN and iron-sulfur (Fe-S) centers, to quinones in the photosynthetic chain and possibly in a chloroplast respiratory chain. The immediate electron acceptor for the enzyme in this species is believed to be plastoquinone. Couples the redox reaction to proton translocation, and thus conserves the redox energy in a proton gradient. The chain is NAD(P)H-quinone oxidoreductase subunit I, chloroplastic from Calycanthus floridus var. glaucus (Eastern sweetshrub).